Consider the following 676-residue polypeptide: tRNA 5-methylaminomethyl-2-thiouridine biosynthesis bifunctional protein MnmC (676 aa).

The tRNA (mnm(5)s(2)U34)-methyltransferase stretch occupies residues 1 to 241 (MFTVTPAKIY…KRECLCGIKN (241 aa)). Positions 268–676 (IGGGIASLFT…RKLLKGTEIK (409 aa)) are FAD-dependent cmnm(5)s(2)U34 oxidoreductase.

In the N-terminal section; belongs to the methyltransferase superfamily. tRNA (mnm(5)s(2)U34)-methyltransferase family. This sequence in the C-terminal section; belongs to the DAO family. It depends on FAD as a cofactor.

It localises to the cytoplasm. The catalysed reaction is 5-aminomethyl-2-thiouridine(34) in tRNA + S-adenosyl-L-methionine = 5-methylaminomethyl-2-thiouridine(34) in tRNA + S-adenosyl-L-homocysteine + H(+). In terms of biological role, catalyzes the last two steps in the biosynthesis of 5-methylaminomethyl-2-thiouridine (mnm(5)s(2)U) at the wobble position (U34) in tRNA. Catalyzes the FAD-dependent demodification of cmnm(5)s(2)U34 to nm(5)s(2)U34, followed by the transfer of a methyl group from S-adenosyl-L-methionine to nm(5)s(2)U34, to form mnm(5)s(2)U34. This is tRNA 5-methylaminomethyl-2-thiouridine biosynthesis bifunctional protein MnmC from Histophilus somni (strain 129Pt) (Haemophilus somnus).